A 143-amino-acid chain; its full sequence is D-aminoacyl-tRNA deacylase (143 aa).

The Gly-cisPro motif, important for rejection of L-amino acids motif lies at 135 to 136 (GP).

It belongs to the DTD family. In terms of assembly, homodimer.

It localises to the cytoplasm. It carries out the reaction glycyl-tRNA(Ala) + H2O = tRNA(Ala) + glycine + H(+). The catalysed reaction is a D-aminoacyl-tRNA + H2O = a tRNA + a D-alpha-amino acid + H(+). Its function is as follows. An aminoacyl-tRNA editing enzyme that deacylates mischarged D-aminoacyl-tRNAs. Also deacylates mischarged glycyl-tRNA(Ala), protecting cells against glycine mischarging by AlaRS. Acts via tRNA-based rather than protein-based catalysis; rejects L-amino acids rather than detecting D-amino acids in the active site. By recycling D-aminoacyl-tRNA to D-amino acids and free tRNA molecules, this enzyme counteracts the toxicity associated with the formation of D-aminoacyl-tRNA entities in vivo and helps enforce protein L-homochirality. The chain is D-aminoacyl-tRNA deacylase from Mycobacterium bovis (strain BCG / Pasteur 1173P2).